The sequence spans 215 residues: Phosphatidylserine decarboxylase proenzyme (215 aa).

The Schiff-base intermediate with substrate; via pyruvic acid role is filled by Ser-185. Ser-185 carries the pyruvic acid (Ser); by autocatalysis modification.

The protein belongs to the phosphatidylserine decarboxylase family. PSD-A subfamily. Heterodimer of a large membrane-associated beta subunit and a small pyruvoyl-containing alpha subunit. The cofactor is pyruvate. Post-translationally, is synthesized initially as an inactive proenzyme. Formation of the active enzyme involves a self-maturation process in which the active site pyruvoyl group is generated from an internal serine residue via an autocatalytic post-translational modification. Two non-identical subunits are generated from the proenzyme in this reaction, and the pyruvate is formed at the N-terminus of the alpha chain, which is derived from the carboxyl end of the proenzyme. The post-translation cleavage follows an unusual pathway, termed non-hydrolytic serinolysis, in which the side chain hydroxyl group of the serine supplies its oxygen atom to form the C-terminus of the beta chain, while the remainder of the serine residue undergoes an oxidative deamination to produce ammonia and the pyruvoyl prosthetic group on the alpha chain.

Its subcellular location is the cell membrane. The catalysed reaction is a 1,2-diacyl-sn-glycero-3-phospho-L-serine + H(+) = a 1,2-diacyl-sn-glycero-3-phosphoethanolamine + CO2. Its pathway is phospholipid metabolism; phosphatidylethanolamine biosynthesis; phosphatidylethanolamine from CDP-diacylglycerol: step 2/2. Functionally, catalyzes the formation of phosphatidylethanolamine (PtdEtn) from phosphatidylserine (PtdSer). This Streptomyces avermitilis (strain ATCC 31267 / DSM 46492 / JCM 5070 / NBRC 14893 / NCIMB 12804 / NRRL 8165 / MA-4680) protein is Phosphatidylserine decarboxylase proenzyme.